The sequence spans 190 residues: Spermatogenesis-associated protein 12 (190 aa).

Expressed in testis.

This Homo sapiens (Human) protein is Spermatogenesis-associated protein 12 (SPATA12).